A 511-amino-acid polypeptide reads, in one-letter code: Phenylalanine--tRNA ligase alpha subunit (511 aa).

L-phenylalanine contacts are provided by residues T352, 390 to 392 (QVE), Y429, and F455.

Belongs to the class-II aminoacyl-tRNA synthetase family. Phe-tRNA synthetase alpha subunit type 2 subfamily. In terms of assembly, tetramer of two alpha and two beta subunits. It depends on Mg(2+) as a cofactor.

It is found in the cytoplasm. The enzyme catalyses tRNA(Phe) + L-phenylalanine + ATP = L-phenylalanyl-tRNA(Phe) + AMP + diphosphate + H(+). The protein is Phenylalanine--tRNA ligase alpha subunit of Methanothermobacter thermautotrophicus (strain ATCC 29096 / DSM 1053 / JCM 10044 / NBRC 100330 / Delta H) (Methanobacterium thermoautotrophicum).